The primary structure comprises 356 residues: Probable L-asparaginase 4 (356 aa).

Positions 1-22 (MWGFIVTCGIFLVLLCQLRLLS) are cleaved as a signal peptide. In terms of domain architecture, Asparaginase/glutaminase spans 36–356 (PNVTVFAMGG…RDIEGLFSIK (321 aa)). A glycan (N-linked (GlcNAc...) asparagine) is linked at Asn-37. Catalysis depends on Thr-46, which acts as the O-isoaspartyl threonine intermediate. N-linked (GlcNAc...) asparagine glycosylation occurs at Asn-52. Substrate is bound by residues Ser-93 and 126 to 127 (TD). N-linked (GlcNAc...) asparagine glycosylation occurs at Asn-176.

Belongs to the asparaginase 1 family.

The protein localises to the secreted. The protein resides in the cell wall. It catalyses the reaction L-asparagine + H2O = L-aspartate + NH4(+). In Schizosaccharomyces pombe (strain 972 / ATCC 24843) (Fission yeast), this protein is Probable L-asparaginase 4.